We begin with the raw amino-acid sequence, 249 residues long: DNA polymerase sliding clamp (249 aa).

Belongs to the PCNA family. As to quaternary structure, homotrimer. The subunits circularize to form a toroid; DNA passes through its center. Replication factor C (RFC) is required to load the toroid on the DNA.

Its function is as follows. Sliding clamp subunit that acts as a moving platform for DNA processing. Responsible for tethering the catalytic subunit of DNA polymerase and other proteins to DNA during high-speed replication. The polypeptide is DNA polymerase sliding clamp (Thermococcus fumicolans).